The primary structure comprises 272 residues: GEM-like protein 5 (272 aa).

Residues 1–42 are disordered; it reads MTGSQEDQPKIIIDQEQPKTLETEHQPEPSSSSPDQKKWGTH. Positions 16–27 are enriched in basic and acidic residues; it reads EQPKTLETEHQP. One can recognise a GRAM domain in the interval 143–221; the sequence is SLFRQIFGTE…ANVATVNPVV (79 aa).

It belongs to the GEM family.

The protein is GEM-like protein 5 of Arabidopsis thaliana (Mouse-ear cress).